A 116-amino-acid polypeptide reads, in one-letter code: Large ribosomal subunit protein bL21c (116 aa).

The protein belongs to the bacterial ribosomal protein bL21 family. In terms of assembly, part of the 50S ribosomal subunit.

Its subcellular location is the plastid. The protein localises to the chloroplast. This protein binds to 23S rRNA. In Marchantia polymorpha (Common liverwort), this protein is Large ribosomal subunit protein bL21c.